The chain runs to 208 residues: Mitochondrial import inner membrane translocase subunit Tim23 (208 aa).

The next 3 membrane-spanning stretches (helical) occupy residues Phe73 to Leu93, Ala125 to Ile145, and Gly173 to Leu193.

It belongs to the Tim17/Tim22/Tim23 family. Component of the TIM23 complex at least composed of timm23, timm17 and timm50. The complex interacts with the timm44 component of the PAM complex.

The protein localises to the mitochondrion inner membrane. Essential component of the TIM23 complex, a complex that mediates the translocation of transit peptide-containing proteins across the mitochondrial inner membrane. Plays an essential role in early embryonic development. The polypeptide is Mitochondrial import inner membrane translocase subunit Tim23 (timm23) (Danio rerio (Zebrafish)).